The chain runs to 622 residues: Chaperone protein HscA homolog (622 aa).

The protein belongs to the heat shock protein 70 family.

In terms of biological role, chaperone involved in the maturation of iron-sulfur cluster-containing proteins. Has a low intrinsic ATPase activity which is markedly stimulated by HscB. This is Chaperone protein HscA homolog from Burkholderia cenocepacia (strain HI2424).